A 335-amino-acid polypeptide reads, in one-letter code: Cytochrome c biogenesis protein CcsA (335 aa).

A run of 8 helical transmembrane segments spans residues 15-35, 36-56, 68-88, 97-117, 142-162, 243-263, 278-298, and 304-324; these read FLLL…PNVT, WLPT…ATLL, LSNL…IHLV, LVGV…ALSL, VMML…AFLV, IIGL…VWAN, WALI…TKGW, and AILA…VNLL.

It belongs to the CcmF/CycK/Ccl1/NrfE/CcsA family. As to quaternary structure, may interact with ccs1.

The protein localises to the cellular thylakoid membrane. Functionally, required during biogenesis of c-type cytochromes (cytochrome c6 and cytochrome f) at the step of heme attachment. The sequence is that of Cytochrome c biogenesis protein CcsA from Crocosphaera subtropica (strain ATCC 51142 / BH68) (Cyanothece sp. (strain ATCC 51142)).